The primary structure comprises 113 residues: LQPMAIALAAVADGTSMITENVFEARLAFVEEMIRLGADARTDGHHAVVRGIPQLSSAPVWSSDIRAGAGLVLAGLVADGETEVHDVFHIDRGYRLFVENLLSLGAEIERVGS.

Residue valine 22 coordinates UDP-N-acetyl-alpha-D-glucosamine.

It belongs to the EPSP synthase family. MurA subfamily.

The protein localises to the cytoplasm. The catalysed reaction is phosphoenolpyruvate + UDP-N-acetyl-alpha-D-glucosamine = UDP-N-acetyl-3-O-(1-carboxyvinyl)-alpha-D-glucosamine + phosphate. It functions in the pathway cell wall biogenesis; peptidoglycan biosynthesis. In terms of biological role, cell wall formation. Adds enolpyruvyl to UDP-N-acetylglucosamine. The chain is UDP-N-acetylglucosamine 1-carboxyvinyltransferase (murA) from Mycolicibacterium fortuitum (Mycobacterium fortuitum).